A 355-amino-acid polypeptide reads, in one-letter code: MKIAVLLSGGVDSSVALYRIINKGYSNIKCYYLKIWVEDELSYIGNCPWQEDLNYVEAICNKFNVPYEIINFQKEYYNKVVSYTIEELKNGNTPSPDIFCNQRIKFGAFFEKINSQYDLVVTGHYAKIQIKESKFLLKQAKDKIKDQSYFLSHLSQKQMSKLYFPLGTLLKSEVRQIAKNINLPNKDRKDSQGICFLGKIKYNEFIKYHLGEKKGNIIEKETGKIIGIHNGYWFFTVGQRRGIKLSNGPWFVIEKDLEKNIIYISHNENYLKQAKRKFLVHEIHWINDTPTNFENFKIKIRHGEKKYSCKLKLITNNLMEISLNKKDQGISPGQFAIFYKNTECLGGAKIFKIIE.

ATP contacts are provided by residues 6–13 (LLSGGVDS) and Leu-33. Residue Cys-100 is the Nucleophile of the active site. A disulfide bond links Cys-100 and Cys-195. ATP is bound at residue Gly-123. Residues 145–147 (KDQ) are interaction with tRNA. Catalysis depends on Cys-195, which acts as the Cysteine persulfide intermediate.

It belongs to the MnmA/TRMU family.

The protein localises to the cytoplasm. It catalyses the reaction S-sulfanyl-L-cysteinyl-[protein] + uridine(34) in tRNA + AH2 + ATP = 2-thiouridine(34) in tRNA + L-cysteinyl-[protein] + A + AMP + diphosphate + H(+). In terms of biological role, catalyzes the 2-thiolation of uridine at the wobble position (U34) of tRNA, leading to the formation of s(2)U34. The sequence is that of tRNA-specific 2-thiouridylase MnmA from Borreliella burgdorferi (strain ATCC 35210 / DSM 4680 / CIP 102532 / B31) (Borrelia burgdorferi).